The following is an 86-amino-acid chain: Mu-theraphotoxin-Cg2a 2 (86 aa).

An N-terminal signal peptide occupies residues 1 to 21 (MKVSVVITLAVLGVMFVWASA). A propeptide spanning residues 22–50 (AELEERGSDQRDSPAWIKSMERIFQSEER) is cleaved from the precursor. 3 disulfide bridges follow: Cys52–Cys66, Cys59–Cys71, and Cys65–Cys78. Phe84 carries the post-translational modification Phenylalanine amide.

This sequence belongs to the neurotoxin 10 (Hwtx-1) family. 37 (Jztx-31) subfamily. As to expression, expressed by the venom gland.

Its subcellular location is the secreted. Its function is as follows. Inhibits both peak current and fast inactivation of voltage-gated sodium channels (Nav) channels. Inhibits the inactivation of Nav on DRG neurons (EC(50)=1.77 uM) and peak current of cardiac myocytes (IC(50)=0.90 uM). The polypeptide is Mu-theraphotoxin-Cg2a 2 (Chilobrachys guangxiensis (Chinese earth tiger tarantula)).